The chain runs to 653 residues: ATP-dependent zinc metalloprotease FtsH 1 (653 aa).

Over 1-7 the chain is Cytoplasmic; that stretch reads MSRFFKS. Residues 8-28 traverse the membrane as a helical segment; sequence AAFPILIVVVLAFFAQRLINP. The Extracellular portion of the chain corresponds to 29–105; the sequence is GDSGPRYDYS…FDIEGTKSNG (77 aa). The helical transmembrane segment at 106–126 threads the bilayer; the sequence is WLSLLTYVLPFLIFIGFWIFL. Residues 127–653 are Cytoplasmic-facing; it reads MNQVQGGGSK…MHFPERPELA (527 aa). Position 198 to 205 (198 to 205) interacts with ATP; it reads GPPGTGKT. His-420 is a binding site for Zn(2+). Glu-421 is a catalytic residue. The Zn(2+) site is built by His-424 and Asp-496. The interval 603 to 653 is disordered; it reads EEVFGAEASPPPDVPLPPATERGRDTPRPLPRPGLAGGAAEMHFPERPELA. The segment covering 611-620 has biased composition (pro residues); the sequence is SPPPDVPLPP.

This sequence in the central section; belongs to the AAA ATPase family. In the C-terminal section; belongs to the peptidase M41 family. As to quaternary structure, homohexamer. Zn(2+) serves as cofactor.

It is found in the cell membrane. Acts as a processive, ATP-dependent zinc metallopeptidase for both cytoplasmic and membrane proteins. Plays a role in the quality control of integral membrane proteins. The protein is ATP-dependent zinc metalloprotease FtsH 1 of Conexibacter woesei (strain DSM 14684 / CCUG 47730 / CIP 108061 / JCM 11494 / NBRC 100937 / ID131577).